The sequence spans 321 residues: MHKYQTHWVESSEIKILSDKGKKHIALVAGGMSAEREVSLISAEGVGKALIEAGYKVTFIDMGADIAVKLHEIKPDIVFNCLHGTYGEDGCLPGLLNIMRIPYTHSGVLASSLAFDKVHSRSWFLTNNINMAESIVISKGDNIKTDPIKRPYVIKPFTQGSSIGVEVIFEEDDFNFANYDFPYGDEVIIEKYIKGRELQVAILNGKALGALEIKLLKNRFYDYETKYTEGFAEHLCPAPLPTDIYDKLLKESEKIYNTMNCKGAARAEFILEDGTNKLYALEINTHPGMTPLSIVPEIAAYHGIDFVNLIEEILKTASFES.

The 195-residue stretch at 121 to 315 (RSWFLTNNIN…FVNLIEEILK (195 aa)) folds into the ATP-grasp domain. Residue 148–199 (IKRPYVIKPFTQGSSIGVEVIFEEDDFNFANYDFPYGDEVIIEKYIKGRELQ) participates in ATP binding. Glu-268, Glu-282, and Asn-284 together coordinate Mg(2+).

Belongs to the D-alanine--D-alanine ligase family. The cofactor is Mg(2+). Mn(2+) is required as a cofactor.

It is found in the cytoplasm. The catalysed reaction is 2 D-alanine + ATP = D-alanyl-D-alanine + ADP + phosphate + H(+). It functions in the pathway cell wall biogenesis; peptidoglycan biosynthesis. In terms of biological role, cell wall formation. The sequence is that of D-alanine--D-alanine ligase from Rickettsia bellii (strain OSU 85-389).